The chain runs to 406 residues: Multifunctional CCA protein (406 aa).

ATP is bound by residues Gly-8 and Arg-11. 2 residues coordinate CTP: Gly-8 and Arg-11. 2 residues coordinate Mg(2+): Asp-21 and Asp-23. 3 residues coordinate ATP: Arg-91, Arg-138, and Arg-141. CTP-binding residues include Arg-91, Arg-138, and Arg-141. Residues 229 to 331 enclose the HD domain; the sequence is TGIHQEMVSD…LELLGRCDAL (103 aa).

It belongs to the tRNA nucleotidyltransferase/poly(A) polymerase family. Bacterial CCA-adding enzyme type 1 subfamily. Monomer. Can also form homodimers and oligomers. Mg(2+) is required as a cofactor. It depends on Ni(2+) as a cofactor.

The catalysed reaction is a tRNA precursor + 2 CTP + ATP = a tRNA with a 3' CCA end + 3 diphosphate. It catalyses the reaction a tRNA with a 3' CCA end + 2 CTP + ATP = a tRNA with a 3' CCACCA end + 3 diphosphate. Its function is as follows. Catalyzes the addition and repair of the essential 3'-terminal CCA sequence in tRNAs without using a nucleic acid template. Adds these three nucleotides in the order of C, C, and A to the tRNA nucleotide-73, using CTP and ATP as substrates and producing inorganic pyrophosphate. tRNA 3'-terminal CCA addition is required both for tRNA processing and repair. Also involved in tRNA surveillance by mediating tandem CCA addition to generate a CCACCA at the 3' terminus of unstable tRNAs. While stable tRNAs receive only 3'-terminal CCA, unstable tRNAs are marked with CCACCA and rapidly degraded. The polypeptide is Multifunctional CCA protein (Stenotrophomonas maltophilia (strain R551-3)).